The following is a 608-amino-acid chain: Glutamine--fructose-6-phosphate aminotransferase [isomerizing] (608 aa).

The Nucleophile; for GATase activity role is filled by C2. A Glutamine amidotransferase type-2 domain is found at 2 to 217 (CGIVGYIGDK…DHEIAIIKKD (216 aa)). SIS domains are found at residues 285–424 (TKED…KKGT) and 453–598 (VIQK…VDKP). K603 acts as the For Fru-6P isomerization activity in catalysis.

In terms of assembly, homodimer.

The protein localises to the cytoplasm. The enzyme catalyses D-fructose 6-phosphate + L-glutamine = D-glucosamine 6-phosphate + L-glutamate. Catalyzes the first step in hexosamine metabolism, converting fructose-6P into glucosamine-6P using glutamine as a nitrogen source. The sequence is that of Glutamine--fructose-6-phosphate aminotransferase [isomerizing] from Caldanaerobacter subterraneus subsp. tengcongensis (strain DSM 15242 / JCM 11007 / NBRC 100824 / MB4) (Thermoanaerobacter tengcongensis).